A 231-amino-acid polypeptide reads, in one-letter code: tRNA1(Val) (adenine(37)-N6)-methyltransferase (231 aa).

Belongs to the methyltransferase superfamily. tRNA (adenine-N(6)-)-methyltransferase family.

It localises to the cytoplasm. The catalysed reaction is adenosine(37) in tRNA1(Val) + S-adenosyl-L-methionine = N(6)-methyladenosine(37) in tRNA1(Val) + S-adenosyl-L-homocysteine + H(+). Functionally, specifically methylates the adenine in position 37 of tRNA(1)(Val) (anticodon cmo5UAC). The polypeptide is tRNA1(Val) (adenine(37)-N6)-methyltransferase (Flavobacteriaceae bacterium (strain 3519-10)).